The sequence spans 185 residues: Elongation factor P (185 aa).

Belongs to the elongation factor P family.

Its subcellular location is the cytoplasm. The protein operates within protein biosynthesis; polypeptide chain elongation. Functionally, involved in peptide bond synthesis. Stimulates efficient translation and peptide-bond synthesis on native or reconstituted 70S ribosomes in vitro. Probably functions indirectly by altering the affinity of the ribosome for aminoacyl-tRNA, thus increasing their reactivity as acceptors for peptidyl transferase. The polypeptide is Elongation factor P (Bacillus cereus (strain B4264)).